The sequence spans 411 residues: Floricaula/leafy-like protein (411 aa).

The interval 220–259 is disordered; that stretch reads PDTNYGSEQTKACKKQKRRRSKDSGEDGEERQREHPFIVT. Residues 231-240 show a composition bias toward basic residues; sequence ACKKQKRRRS. The segment covering 241–255 has biased composition (basic and acidic residues); sequence KDSGEDGEERQREHP. DNA-binding regions lie at residues 252–256, 321–328, and 392–395; these read REHPF, NKPKMRHY, and YVPT.

Belongs to the FLO/LFY family. In terms of tissue distribution, expressed in vegetative buds and male cones but not in female cones, vascular tissue, roots or secondary needles.

Its subcellular location is the nucleus. In terms of biological role, probable transcription factor. The protein is Floricaula/leafy-like protein (FLL) of Pinus radiata (Monterey pine).